A 305-amino-acid chain; its full sequence is Flavin-dependent thymidylate synthase (305 aa).

The ThyX domain occupies 50–261 (GFVRLIDYLG…PCATASFENH (212 aa)). FAD-binding positions include Ser96, 119–121 (RHR), and Glu127. Residues 116–119 (QWMR), 127–131 (EVSSR), and Arg200 contribute to the dUMP site. Residues 119–129 (RHRTARISEVS) carry the ThyX motif motif. Residues 216–218 (DLH) and His222 each bind FAD. Arg227 contributes to the dUMP binding site. Arg227 acts as the Involved in ionization of N3 of dUMP, leading to its activation in catalysis.

Belongs to the thymidylate synthase ThyX family. In terms of assembly, homotetramer. The cofactor is FAD.

It carries out the reaction dUMP + (6R)-5,10-methylene-5,6,7,8-tetrahydrofolate + NADPH + H(+) = dTMP + (6S)-5,6,7,8-tetrahydrofolate + NADP(+). The protein operates within pyrimidine metabolism; dTTP biosynthesis. Functionally, catalyzes the reductive methylation of 2'-deoxyuridine-5'-monophosphate (dUMP) to 2'-deoxythymidine-5'-monophosphate (dTMP) while utilizing 5,10-methylenetetrahydrofolate (mTHF) as the methyl donor, and NADPH and FADH(2) as the reductant. This chain is Flavin-dependent thymidylate synthase, found in Treponema pallidum (strain Nichols).